The sequence spans 384 residues: Actin-binding Rho-activating protein (384 aa).

Residues 1 to 11 (MARGEKGRGEG) are compositionally biased toward basic and acidic residues. Disordered stretches follow at residues 1-20 (MARG…LRKV), 32-159 (GWQQ…SPTR), and 181-211 (EQEE…EQDG). A compositionally biased stretch (polar residues) spans 35–47 (QWANENSTRQAQE). Over residues 134-145 (DGDEPEPEQPES) the composition is skewed to acidic residues. A phosphoserine mark is found at Ser-156 and Ser-191. 2 actin-binding regions span residues 202–302 (ETEE…AERA) and 303–384 (KRAE…TLLK). Interaction with actin regions lie at residues 243 to 288 (SQVG…GDEG) and 355 to 384 (MRAR…TLLK).

In terms of assembly, binds F-actin and ABLIM1, ABLIM2 and ABLIM3. Interaction with ABLIM2 and ABLIM3 enhances activity. As to expression, specifically expressed in heart and skeletal muscles.

It is found in the cytoplasm. It localises to the myofibril. The protein resides in the sarcomere. The protein localises to the cytoskeleton. In terms of biological role, acts as an activator of serum response factor (SRF)-dependent transcription possibly by inducing nuclear translocation of MKL1 or MKL2 and through a mechanism requiring Rho-actin signaling. This chain is Actin-binding Rho-activating protein (ABRA), found in Sus scrofa (Pig).